We begin with the raw amino-acid sequence, 351 residues long: C-X-C chemokine receptor type 1 (351 aa).

Residues 1–44 (MAEAEYFIWTNPEGDFEKEFGNITGMLPTGDYFIPCKRVPITNR) lie on the Extracellular side of the membrane. N-linked (GlcNAc...) asparagine glycosylation occurs at N22. A helical transmembrane segment spans residues 45 to 71 (QALVVFYALVSLLSLLGNSLVMLVILY). Over 72–80 (RRRTRSVMD) the chain is Cytoplasmic. Residues 81-101 (VYVLNLAIADLLFSLTLPFLA) form a helical membrane-spanning segment. Residues 102 to 116 (VSKLKGWIFGTPLCK) are Extracellular-facing. A disulfide bridge connects residues C115 and C192. Residues 117 to 138 (MVSLLKEFNFFSGILLLACISV) form a helical membrane-spanning segment. The Cytoplasmic portion of the chain corresponds to 139–159 (DRYLAIVHATRTLARKRYLVK). The chain crosses the membrane as a helical span at residues 160–179 (FVCVGIWGLSLILSLPFAIF). Residues 180–204 (RQAYKPFRSGTVCYEVLGEATTDFR) are Extracellular-facing. A helical membrane pass occupies residues 205–225 (MTLRGLSHIFGFLLPLLTMLV). At 226-247 (CYGLTLRMLFKTHMRQKHRAMG) the chain is on the cytoplasmic side. Residues 248 to 269 (VIFAVVLVFLLCCLPYNLVLLS) traverse the membrane as a helical segment. Topologically, residues 270–290 (DTLLGAHLIEDTCERRNDIDQ) are extracellular. A helical transmembrane segment spans residues 291–313 (ALYITEILGFSHSCLNPIIYAFV). The Cytoplasmic portion of the chain corresponds to 314 to 351 (GQNFRHEFLKILANHGLVRKEVLTHRRVAFHTSLTAIY).

Belongs to the G-protein coupled receptor 1 family. Interacts with IL8. Interacts with GNAI2.

The protein localises to the cell membrane. Its function is as follows. Receptor to interleukin-8, which is a powerful neutrophils chemotactic factor. Binding of IL-8 to the receptor causes activation of neutrophils. This response is mediated via a G-protein that activates a phosphatidylinositol-calcium second messenger system. The protein is C-X-C chemokine receptor type 1 (Cxcr1) of Mus musculus (Mouse).